The following is a 755-amino-acid chain: Diamine oxidase [copper-containing] (755 aa).

A signal peptide spans 1–24 (MGRGTLALGWAGAALLLLQMLAAA). Asn115 is a glycosylation site (N-linked (GlcNAc...) asparagine). An intrachain disulfide couples Cys182 to Cys186. Catalysis depends on Asp376, which acts as the Proton acceptor. Cys394 and Cys420 form a disulfide bridge. The Schiff-base intermediate with substrate; via topaquinone role is filled by Tyr464. 2',4',5'-topaquinone is present on Tyr464. Residues His513 and His515 each contribute to the Cu(2+) site. Residues Asp522, Leu523, and Asp524 each contribute to the Ca(2+) site. Residue Asn541 is glycosylated (N-linked (GlcNAc...) asparagine). Glu565, Phe656, Asn659, Glu661, Asp667, and Leu668 together coordinate Ca(2+). His678 serves as a coordination point for Cu(2+). Asn749 carries an N-linked (GlcNAc...) asparagine glycan.

The protein belongs to the copper/topaquinone oxidase family. Homodimer; disulfide-linked. Requires Cu(2+) as cofactor. Ca(2+) serves as cofactor. It depends on L-topaquinone as a cofactor. Post-translationally, topaquinone (TPQ) is generated by copper-dependent autoxidation of a specific tyrosyl residue. N-glycosylated; the glycans are primarily linear, di-, or tribranched fucosylated complex type.

Its subcellular location is the secreted. It localises to the extracellular space. The protein resides in the cell membrane. The enzyme catalyses histamine + O2 + H2O = imidazole-4-acetaldehyde + H2O2 + NH4(+). It catalyses the reaction N(tau)-methylhistamine + O2 + H2O = 1-methylimidazole-4-acetaldehyde + H2O2 + NH4(+). It carries out the reaction putrescine + O2 + H2O = 4-aminobutanal + H2O2 + NH4(+). The catalysed reaction is cadaverine + O2 + H2O = 5-aminopentanal + H2O2 + NH4(+). Inhibited by amiloride and amiloride analogs. Catalyzes the oxidative deamination of primary amines to the corresponding aldehydes with the concomitant production of hydrogen peroxide and ammonia. Its preferred substrates in vitro are the diamines histamine and 1-methylhistamine and it could therefore play a role in allergic and immune responses. Has a broad specificity for diamines and can also act on cadaverine and putrescine, two products of amino acid catabolism. It could also act on polyamines, like spermidine and spermine though less efficiently, and regulate various biological processes. The protein is Diamine oxidase [copper-containing] of Sus scrofa (Pig).